We begin with the raw amino-acid sequence, 131 residues long: Class I hydrophobin POH2 (131 aa).

An N-terminal signal peptide occupies residues 1-21; it reads MFFRTSSLFTTIVAFTVMAAA. Cystine bridges form between cysteine 50–cysteine 110, cysteine 57–cysteine 104, cysteine 58–cysteine 91, and cysteine 111–cysteine 124. Residues asparagine 115 and asparagine 128 are each glycosylated (N-linked (GlcNAc...) asparagine).

The protein belongs to the fungal hydrophobin family. Self-assembles to form functional amyloid fibrils called rodlets. Self-assembly into fibrillar rodlets occurs spontaneously at hydrophobic:hydrophilic interfaces and the rodlets further associate laterally to form amphipathic monolayers. In terms of tissue distribution, expressionn is switched off in the fruiting bodies but abundantly expressed in the vegetative mycelium of both monokaryon and dikaryon.

Its subcellular location is the secreted. The protein resides in the cell wall. In terms of biological role, aerial growth, conidiation, and dispersal of filamentous fungi in the environment rely upon a capability of their secreting small amphipathic proteins called hydrophobins (HPBs) with low sequence identity. Class I can self-assemble into an outermost layer of rodlet bundles on aerial cell surfaces, conferring cellular hydrophobicity that supports fungal growth, development and dispersal; whereas Class II form highly ordered films at water-air interfaces through intermolecular interactions but contribute nothing to the rodlet structure. POH2 is a class I hydrophobin that causes a large drop in the water-surface tension, enabling hyphae to breach the interface and grow into the air, in both the primary and the secondary mycelium. In the latter mycelium POH2 maight also play a role in the emergence of fruiting bodies. Secreted POH2 could also play a role in facilitating lignin degradation. The chain is Class I hydrophobin POH2 from Pleurotus ostreatus (Oyster mushroom).